Consider the following 124-residue polypeptide: KESAAAKFERQHMDPSPSSASSSNYCNQMMQSRNLTQDRCKPVNTFVHESLADVQAVCFQKNVICKNGQSNCYQSNSAMHITDCRESGNSKYPNCVYKTTQAEKHIIVACEGNPYVPVHFDASV.

Residues 1-13 (KESAAAKFERQHM) show a composition bias toward basic and acidic residues. Positions 1 to 25 (KESAAAKFERQHMDPSPSSASSSNY) are disordered. Residues lysine 7 and arginine 10 each coordinate substrate. The active-site Proton acceptor is histidine 12. 4 disulfide bridges follow: cysteine 26–cysteine 84, cysteine 40–cysteine 95, cysteine 58–cysteine 110, and cysteine 65–cysteine 72. An N-linked (GlcNAc...) asparagine; partial glycan is attached at asparagine 34. Residues 41-45 (KPVNT), lysine 66, and arginine 85 each bind substrate. The Proton donor role is filled by histidine 119.

This sequence belongs to the pancreatic ribonuclease family. In terms of assembly, monomer. Interacts with and forms tight 1:1 complexes with RNH1. Dimerization of two such complexes may occur. Interaction with RNH1 inhibits this protein. Pancreas.

Its subcellular location is the secreted. It carries out the reaction an [RNA] containing cytidine + H2O = an [RNA]-3'-cytidine-3'-phosphate + a 5'-hydroxy-ribonucleotide-3'-[RNA].. The enzyme catalyses an [RNA] containing uridine + H2O = an [RNA]-3'-uridine-3'-phosphate + a 5'-hydroxy-ribonucleotide-3'-[RNA].. Functionally, endonuclease that catalyzes the cleavage of RNA on the 3' side of pyrimidine nucleotides. Acts on single-stranded and double-stranded RNA. This chain is Ribonuclease pancreatic (RNASE1), found in Capreolus capreolus (European roe deer).